A 191-amino-acid polypeptide reads, in one-letter code: ECF RNA polymerase sigma-E factor (191 aa).

Residues 1-153 (MSEQLTDQVL…MAITLRELDG (153 aa)) form a binds RNAP core region. Positions 25–92 (LVVRYQHKVA…KNYLVAQGRR (68 aa)) are sigma-70 factor domain-2. A Polymerase core binding motif is present at residues 48–61 (DVVQESFIKAYRAL). Residues 129–180 (QIVFRTIESLPEDLRMAITLRELDGLSYEEIAAIMDCPVGTVRSRIFRAREA) are sigma-70 factor domain-4. A DNA-binding region (H-T-H motif) is located at residues 156–175 (YEEIAAIMDCPVGTVRSRIF).

Belongs to the sigma-70 factor family. ECF subfamily. In terms of assembly, interacts transiently with the RNAP catalytic core formed by RpoA, RpoB, RpoC and RpoZ (2 alpha, 1 beta, 1 beta' and 1 omega subunit) to form the RNAP holoenzyme that can initiate transcription. Interacts 1:1 with anti-sigma-E factor RseA which prevents binding to RNAP catalytic core.

The protein resides in the cytoplasm. Its activity is regulated as follows. ECF sigma-E is held in an inactive form by its cognate anti-sigma factor (RseA) until released by regulated intramembrane proteolysis (RIP). RIP occurs when an extracytoplasmic signal (periplasmic, acid or heat stress) triggers a concerted proteolytic cascade to transmit information and elicit cellular responses. In S.typhimurium there are 2 cascades, the heat shock response which depends on DegS and RseP, and acid response which depends only on RseP. The anti-sigma factor RseA is an inner membrane protein, binding sigma-E in the cytoplasm and RseB in the periplasm. RseA is first cut extracytoplasmically (site-1 protease, S1P, by DegS), then within the membrane itself (site-2 protease, S2P, by RseP), while cytoplasmic proteases (predominantly ClpX-ClpP) finish degrading the regulatory protein, liberating sigma-E. Degradation of RseA requires 2 signals to activate DegS; an outer membrane protein (OMP) signal activates DegS, while an LPS signal causes release of RseB from RseA, freeing RseA to be cleaved. OMP stress can be abrogated by overexpression of the sRNA rybB. In terms of biological role, sigma factors are initiation factors that promote the attachment of RNA polymerase (RNAP) to specific initiation sites and are then released. Extracytoplasmic function (ECF) sigma-E controls the envelope stress response, responding to periplasmic protein stress, increased levels of periplasmic lipopolysaccharide (LPS) as well as acid stress, heat shock and oxidative stress; it controls protein processing in the extracytoplasmic compartment. In Salmonella typhimurium (strain 14028s / SGSC 2262), this protein is ECF RNA polymerase sigma-E factor (rpoE).